The primary structure comprises 66 residues: Nigrocin-2ISa (66 aa).

Residues 1–22 (MFTLKKSMLLLFFLGTINLSLC) form the signal peptide. A propeptide spans 23-43 (QEERDAEEERRDEDNAKMEEI) (removed in mature form). A disulfide bridge links C60 with C66.

As to expression, expressed by the skin glands.

It localises to the secreted. Its function is as follows. Has antimicrobial activity against Gram-negative bacterium E.coli ATCC 8739 (MIC=25 ug), against Gram positive bacteria S.aureus ATCC 6538 (MIC=3.1 ug), methicillin-resistant S.aureus ATCC 43300 (MIC=12.5 ug), B.subtilis ATCC 6633 (MIC=12.5 ug) and against fungus C.albicans ATCC 90028 (MIC=50 ug). In Odorrana ishikawae (Ishikawa's frog), this protein is Nigrocin-2ISa.